Here is a 162-residue protein sequence, read N- to C-terminus: MLRALGSRLLVASRPAAYRSFQQSLRPVPRFFIHKMSTKTPINSPKLSSAGPYNQAIKANGVIYCSGQIPVANGKVIEGTVGDQTRQCLLNLQEVLTEAGSSLNKIVKVNIFLADMDDFAAVNKVYTEVLPDPKPARSCVAVKTVPLSTQGVKIEIECIALE.

This sequence belongs to the RutC family.

It localises to the mitochondrion. The protein localises to the cytoplasm. Plays a role in the maintenance of mitochondrial DNA. The polypeptide is Protein mmf1, mitochondrial (mmf1) (Schizosaccharomyces pombe (strain 972 / ATCC 24843) (Fission yeast)).